We begin with the raw amino-acid sequence, 717 residues long: Cell division cycle protein 27 homolog A (717 aa).

The segment covering 198–208 (TEHIPGENQQD) has biased composition (polar residues). Disordered regions lie at residues 198 to 217 (TEHI…QPGD), 282 to 315 (LSAE…KDSH), and 342 to 374 (SKEA…SPDR). The span at 293 to 304 (RRSARIAARKKN) shows a compositional bias: basic residues. Residues 342–356 (SKEATTSGQSVSDIG) are compositionally biased toward polar residues. TPR repeat units follow at residues 421-454 (HWVL…YPYA), 489-522 (PESW…NERF), 524-556 (YAHT…DTRH), 557-590 (YNAW…NPRS), 592-624 (VIMC…DAKN), 625-658 (PLPK…APQE), and 659-692 (SSVH…SPSP).

The protein belongs to the APC3/CDC27 family. In terms of assembly, the APC/C is composed of at least 10 subunits. Interacts with APC2 and APC10.

Its subcellular location is the nucleus. The protein operates within protein modification; protein ubiquitination. In terms of biological role, component of the anaphase promoting complex/cyclosome (APC/C), a cell cycle-regulated E3 ubiquitin-protein ligase complex that controls progression through mitosis and the G1 phase of the cell cycle. The APC/C complex controls several key steps in the cell cycle by mediating ubiquitination and subsequent degradation of target proteins such as cyclins. The APC/C complex is required for the female gametophyte development and is involved in several aspect of development by controlling cell division and cell elongation. Involved in the control of endoreduplication. Functionally redundant with CDC27B in the control of gametophyte development. The protein is Cell division cycle protein 27 homolog A (CDC27A) of Arabidopsis thaliana (Mouse-ear cress).